A 285-amino-acid polypeptide reads, in one-letter code: Bifunctional protein FolD (285 aa).

NADP(+)-binding positions include 164–166 (GAS), I189, and I230.

The protein belongs to the tetrahydrofolate dehydrogenase/cyclohydrolase family. In terms of assembly, homodimer.

The enzyme catalyses (6R)-5,10-methylene-5,6,7,8-tetrahydrofolate + NADP(+) = (6R)-5,10-methenyltetrahydrofolate + NADPH. It carries out the reaction (6R)-5,10-methenyltetrahydrofolate + H2O = (6R)-10-formyltetrahydrofolate + H(+). It participates in one-carbon metabolism; tetrahydrofolate interconversion. In terms of biological role, catalyzes the oxidation of 5,10-methylenetetrahydrofolate to 5,10-methenyltetrahydrofolate and then the hydrolysis of 5,10-methenyltetrahydrofolate to 10-formyltetrahydrofolate. The protein is Bifunctional protein FolD of Sulfurimonas denitrificans (strain ATCC 33889 / DSM 1251) (Thiomicrospira denitrificans (strain ATCC 33889 / DSM 1251)).